The sequence spans 275 residues: Glutamate racemase (275 aa).

Substrate is bound by residues 22-23 and 54-55; these read DS and YG. The active-site Proton donor/acceptor is the C85. 86–87 lines the substrate pocket; sequence NT. Catalysis depends on C196, which acts as the Proton donor/acceptor. Position 197 to 198 (197 to 198) interacts with substrate; sequence TH.

The protein belongs to the aspartate/glutamate racemases family.

It catalyses the reaction L-glutamate = D-glutamate. The protein operates within cell wall biogenesis; peptidoglycan biosynthesis. Its function is as follows. Provides the (R)-glutamate required for cell wall biosynthesis. This is Glutamate racemase from Pseudomonas syringae pv. tomato (strain ATCC BAA-871 / DC3000).